The chain runs to 148 residues: 1,4-dihydroxy-2-naphthoyl-CoA hydrolase (148 aa).

Aspartate 15 is a catalytic residue.

This sequence belongs to the 4-hydroxybenzoyl-CoA thioesterase family. DHNA-CoA hydrolase subfamily.

It carries out the reaction 1,4-dihydroxy-2-naphthoyl-CoA + H2O = 1,4-dihydroxy-2-naphthoate + CoA + H(+). It functions in the pathway cofactor biosynthesis; phylloquinone biosynthesis. The protein operates within quinol/quinone metabolism; 1,4-dihydroxy-2-naphthoate biosynthesis; 1,4-dihydroxy-2-naphthoate from chorismate: step 7/7. Catalyzes the hydrolysis of 1,4-dihydroxy-2-naphthoyl-CoA (DHNA-CoA) to 1,4-dihydroxy-2-naphthoate (DHNA), a reaction involved in phylloquinone (vitamin K1) biosynthesis. The protein is 1,4-dihydroxy-2-naphthoyl-CoA hydrolase of Nostoc sp. (strain PCC 7120 / SAG 25.82 / UTEX 2576).